The chain runs to 521 residues: uncharacterized protein (521 aa).

The tract at residues 1–25 is disordered; the sequence is MLQRSLGVNGRKLAMSARSAKRERK. 6 helical membrane-spanning segments follow: residues 68–88, 114–134, 160–180, 192–212, 290–310, and 399–419; these read GAVW…GAVL, VLIV…SLTV, VVLA…HTVG, VAVT…IYFL, ALLV…GWCW, and LLFW…CAQI.

The protein localises to the cell membrane. This is an uncharacterized protein from Mycobacterium tuberculosis (strain CDC 1551 / Oshkosh).